The following is a 141-amino-acid chain: Endoribonuclease YbeY (141 aa).

H105, H109, and D115 together coordinate Zn(2+).

Belongs to the endoribonuclease YbeY family. Zn(2+) serves as cofactor.

It is found in the cytoplasm. In terms of biological role, single strand-specific metallo-endoribonuclease involved in late-stage 70S ribosome quality control and in maturation of the 3' terminus of the 16S rRNA. The protein is Endoribonuclease YbeY of Karelsulcia muelleri (strain GWSS) (Sulcia muelleri).